We begin with the raw amino-acid sequence, 734 residues long: Elongation factor G, mitochondrial (734 aa).

Residues 1-32 (MTSFLTSRFGGLALRNVMNNKNGINSFGLRCF) constitute a mitochondrion transit peptide. In terms of domain architecture, tr-type G spans 38–318 (SGLRNIGISA…GVIKYLPSPN (281 aa)). GTP-binding positions include 47-54 (AHIDSGKT), 114-118 (DTPGH), and 168-171 (NKLD).

This sequence belongs to the TRAFAC class translation factor GTPase superfamily. Classic translation factor GTPase family. EF-G/EF-2 subfamily.

It localises to the mitochondrion. It carries out the reaction GTP + H2O = GDP + phosphate + H(+). It functions in the pathway protein biosynthesis; polypeptide chain elongation. Its function is as follows. Mitochondrial GTPase that catalyzes the GTP-dependent ribosomal translocation step during translation elongation. During this step, the ribosome changes from the pre-translocational (PRE) to the post-translocational (POST) state as the newly formed A-site-bound peptidyl-tRNA and P-site-bound deacylated tRNA move to the P and E sites, respectively. Catalyzes the coordinated movement of the two tRNA molecules, the mRNA and conformational changes in the ribosome. The chain is Elongation factor G, mitochondrial (gfm1) from Dictyostelium discoideum (Social amoeba).